Reading from the N-terminus, the 127-residue chain is MSDLKKFAEQLVNLTVKEVNELAAILKEEHGIEPAAAAPVVVAGGGAQGGDSKAAEEKTHFDVILKSAGASKLSVVKLVKDLTGLGLKEAKDLVDAAPKPIKEGAPKAEAESLKSKLEEAGAEVELK.

Residues 98-127 (PKPIKEGAPKAEAESLKSKLEEAGAEVELK) are disordered.

Belongs to the bacterial ribosomal protein bL12 family. Homodimer. Part of the ribosomal stalk of the 50S ribosomal subunit. Forms a multimeric L10(L12)X complex, where L10 forms an elongated spine to which 2 to 4 L12 dimers bind in a sequential fashion. Binds GTP-bound translation factors.

Its function is as follows. Forms part of the ribosomal stalk which helps the ribosome interact with GTP-bound translation factors. Is thus essential for accurate translation. The protein is Large ribosomal subunit protein bL12 of Amoebophilus asiaticus (strain 5a2).